The chain runs to 173 residues: Lipoprotein signal peptidase (173 aa).

Transmembrane regions (helical) follow at residues 24 to 44, 55 to 75, 80 to 100, and 105 to 125; these read PWLG…IAIL, ITGF…SFLA, WQRW…VWLL, and GQKL…GNVI. Catalysis depends on residues D135 and D153. Residues 145-165 form a helical membrane-spanning segment; sequence HWPAFNVADCGICIGAVLLII.

Belongs to the peptidase A8 family.

The protein localises to the cell inner membrane. It carries out the reaction Release of signal peptides from bacterial membrane prolipoproteins. Hydrolyzes -Xaa-Yaa-Zaa-|-(S,diacylglyceryl)Cys-, in which Xaa is hydrophobic (preferably Leu), and Yaa (Ala or Ser) and Zaa (Gly or Ala) have small, neutral side chains.. It participates in protein modification; lipoprotein biosynthesis (signal peptide cleavage). Functionally, this protein specifically catalyzes the removal of signal peptides from prolipoproteins. This Ralstonia nicotianae (strain ATCC BAA-1114 / GMI1000) (Ralstonia solanacearum) protein is Lipoprotein signal peptidase.